The following is a 456-amino-acid chain: GTPase Der (456 aa).

EngA-type G domains lie at 3-167 and 185-360; these read FTIA…PPSD and IRVA…AVWN. Residues 9-16, 56-60, and 119-122 contribute to the GTP site; these read GRPNVGKS, DTAGL, and NKSE. Residues 162–181 form a disordered region; sequence IVPPSDDEDDEREETDEERA. A compositionally biased stretch (acidic residues) spans 166–178; sequence SDDEDDEREETDE. GTP is bound by residues 191 to 198, 238 to 242, and 303 to 306; these read GRPNAGKS, DTAGL, and NKWD. In terms of domain architecture, KH-like spans 361–445; that stretch reads RRVPTAALNR…PVRITLREKA (85 aa).

The protein belongs to the TRAFAC class TrmE-Era-EngA-EngB-Septin-like GTPase superfamily. EngA (Der) GTPase family. As to quaternary structure, associates with the 50S ribosomal subunit.

In terms of biological role, GTPase that plays an essential role in the late steps of ribosome biogenesis. This chain is GTPase Der, found in Bradyrhizobium sp. (strain ORS 278).